The primary structure comprises 367 residues: Peptide chain release factor 2 (367 aa).

Glutamine 254 carries the post-translational modification N5-methylglutamine.

The protein belongs to the prokaryotic/mitochondrial release factor family. Methylated by PrmC. Methylation increases the termination efficiency of RF2.

Its subcellular location is the cytoplasm. Functionally, peptide chain release factor 2 directs the termination of translation in response to the peptide chain termination codons UGA and UAA. In Neisseria meningitidis serogroup A / serotype 4A (strain DSM 15465 / Z2491), this protein is Peptide chain release factor 2.